Reading from the N-terminus, the 149-residue chain is Deoxyuridine 5'-triphosphate nucleotidohydrolase (149 aa).

Substrate is bound by residues 68-70, N81, 85-87, and M95; these read RSG and LID.

It belongs to the dUTPase family. Mg(2+) is required as a cofactor.

It catalyses the reaction dUTP + H2O = dUMP + diphosphate + H(+). It functions in the pathway pyrimidine metabolism; dUMP biosynthesis; dUMP from dCTP (dUTP route): step 2/2. Its function is as follows. This enzyme is involved in nucleotide metabolism: it produces dUMP, the immediate precursor of thymidine nucleotides and it decreases the intracellular concentration of dUTP so that uracil cannot be incorporated into DNA. This Methylibium petroleiphilum (strain ATCC BAA-1232 / LMG 22953 / PM1) protein is Deoxyuridine 5'-triphosphate nucleotidohydrolase.